Reading from the N-terminus, the 294-residue chain is Glycine--tRNA ligase alpha subunit (294 aa).

The protein belongs to the class-II aminoacyl-tRNA synthetase family. As to quaternary structure, tetramer of two alpha and two beta subunits.

It localises to the cytoplasm. It catalyses the reaction tRNA(Gly) + glycine + ATP = glycyl-tRNA(Gly) + AMP + diphosphate. This chain is Glycine--tRNA ligase alpha subunit, found in Sulfurovum sp. (strain NBC37-1).